The chain runs to 434 residues: Methylenetetrahydrofolate--tRNA-(uracil-5-)-methyltransferase TrmFO (434 aa).

Residue 9-14 (GAGLAG) participates in FAD binding.

This sequence belongs to the MnmG family. TrmFO subfamily. Requires FAD as cofactor.

It localises to the cytoplasm. It catalyses the reaction uridine(54) in tRNA + (6R)-5,10-methylene-5,6,7,8-tetrahydrofolate + NADH + H(+) = 5-methyluridine(54) in tRNA + (6S)-5,6,7,8-tetrahydrofolate + NAD(+). It carries out the reaction uridine(54) in tRNA + (6R)-5,10-methylene-5,6,7,8-tetrahydrofolate + NADPH + H(+) = 5-methyluridine(54) in tRNA + (6S)-5,6,7,8-tetrahydrofolate + NADP(+). Its function is as follows. Catalyzes the folate-dependent formation of 5-methyl-uridine at position 54 (M-5-U54) in all tRNAs. This is Methylenetetrahydrofolate--tRNA-(uracil-5-)-methyltransferase TrmFO from Listeria monocytogenes serotype 4b (strain F2365).